Reading from the N-terminus, the 2643-residue chain is MPKGGCSKTPQQEDFALSNDMVEKQTGKKDKDKVSLTKTPKLDRSDGGKEVRERATKRKLPFTVGANGEQKDSDTEKQGPERKRIKKEPVARKSGLLFGMGLSGIRAGYPLSERQQVALLMQMTAEESANSPVDTTPKHPSQSTVCQKGTPNSASKTKDKVNKRNERGETRLHRAAIRGDARRIKELISEGADVNVKDFAGWTALHEACNRGYYDIAKQLLAAGAEVNTKGLDDDTPLHDAANNGHYKVVKLLLRYGGNPQQSNRKGETPLKVANSPTMVNLLLGKGTYTSSEESSTESSEEEDAPSFAPSSSVDGNNTDSEFEKGLKLKAKNPEPQKTVTPVKDEYEFDEDDEQDRVPPVDDKHLLKKDYRKEAKANSFISIPKMEVKSYSKNNTLAPKKAAHRILSDTSDEEDVSVSIGAGEKLRLSAHTMLPGSKARESSSSRQQKEKNKLKKKRKKETKGKEVRFGKRSDKFCSSGSESESSESEEDDGDSVGSSGCLKGSPLVLKDPSLFSSLSASSTSSHGSAVAQKHGSGHTDQHTKHWRTDNWKAISSPAWSEVSSLSDSSRTGLTSESDCSSEGSSVESLKPTRRKQEHRKRGVLQSAPSEKRSSFHPCTDGAVPKLDKEGKVVKKHKTKHKHKHKEKGQCSVSQELKLKSFTYEYEDSKQKSDKAILLESDLSTENKLKVLKHDREHLKKEDKLGRMKPEDKDWLFKDEKVLKRIKDANKDMSRAFREDKDRASKAERERATKDKSPKEEKLRLYKEERKKKSKDRASRLERKNDMKEDKLSKEKEKAFKEDKEKLKKEKLYREDAAFDDYCNKSQFLDHEDTKFSLSDDQQERWFSDLSDSSFDFKGEDSWDSVTDYRDIKNDSVAKLILETVKEDSKEKKRDNKIREKRDFKDSFFRKRDRDCLDKNSEKRRDQTEKHKSIPSYLSEKDKKRRESAEGGRDRRDGRIRSEEVHREDLKECGFESSFKDKSDCDFPKNLEPWERPHAAREKEKKDALEKERKEKGRADKYKEKSSERERSDKSTLDKCQKDKEFEKCFKEKKDGKEKHKDIHSKDRKASFDQLREKKEKVFSSIISEDFSERKDDRKGKEKSWYIADIFTDESEDEKDDCVAGSFKATEASDTQRVDGLPEKEEGREHPSDRHRKSSSDRQHTEKPRDKEPKEKKKDRGASEGGKDKKEKMEKIFEKHKEKKDKECAERYKDRKERASADSAPEKKNKQKLPEKVEKKHFAEDKVKSKHKEKPEKEHSRERERKPSRGPDVEKSLLEKLEEEALHDYREDSNDKISEVSSDSFADHGQEPSLSTLLEVSFSEPPAEDKARDSACLSEKLREKERHRHSSSSSKKSHERERAKKEKAEKKEKSEDYKDSISSVRKDASQFEKDFLDAETYGVSYPTKADVEEELDKAIELFSSEKKDRSDPEREPAKRIEKELKPYGSSAISILKEKKKREKHRERWREEKERHRDKHVDGFLRHHKDEPKPAAKDKDNPPNSFKEKSREESLKLSETKLKEKFKENTEREKGDSIKMSNGNDKLVPSRDSGKKDSRPREKLLGDGDLMMTSFERMLSQKDLEIEERHKRHKERMKQMEKMRHRSGDPKLKEKKPTEDGRKKSLDFPSKKALGLDKKVKEPAPTLTTGESKPHSGPGTESKDWLSGQPLKEVLPASPRTEQSRPTGVPTPTSVVSCPSYEEVMHTPRTPSCSADDYPDLVFDCTDSQHSMPVSTASTSACSPPFFDRFSVASSVVSENAAGQTPTRPISTNLYRSISVDIRRTPEEEFSAGDKLFRQQSVPAPSSFDSPVQHLLEEKAPLPPVPAEKFACLSPGYYSPDYGIPSPKVDTLHCPPTAVVSATPPPDSVFSNLPPKSSPSPRGELLSPAIEGTLPPDLGLPLDATEDQQATAAILPQEPSYLEPLDEGPFTTVITEEPVEWTHTAAEQGLSSSSLIASASENPVSWPVGSELMLKSPQRFAESPKHFCPGESLHSTTPGPYSAAEPTYPVSPGSYPLPAPEPALEEVKDGGTGAIPVAISAAEGAAPYAAPARLESFFSNCKSHPDAPLDTAPEPTGVTAVAQVEALGPLESSFLDSNPSISTLSQVEPVSWHEAFTSPEDDLDLGPFSLPELPLQAKDASDVEAEAAKASPVPPAESPPGPTGVLGGGDVPAPAAEEPPAPPPQEASPQLSTEPEPSEEPKLDVVLEATVETEVLADDSAPEASISNSVPAPSPPQQQPPGGGDEEAETEDPSATPCCAPDGPTTDGLAQAHNSAEASCVVAAAEGPPGNVQAEATDPEPKPTSEVPKAPKVEEVPQRMTRNRAQMLASQSKQGIPAAEKDPMPTPASRAKGRASEEEDAQAQHPRKRRFQRSSQQLQQQLNTSTQQTREVIQQTLAAIVDAIKLDAIEPYHSDRSNPYFEYLQIRKKIEEKRKILCCITPQAPQCYAEYVTYTGSYLLDGKPLSKLHIPVIAPPPSLAEPLKELFKQQEAVRGKLRLQHSIEREKLIVSCEQEILRVHCRAARTIANQAVPFSACTMLLDSEVYNMPLESQGDENKSVRDRFNARQFISWLQDVDDKYDRMKTCLLMRQQHEAAALNAVQRMEWQLKAQELDPAGHKSLCVNEVPSFYVPMVDVNDDFVLLPA.

Disordered stretches follow at residues 1 to 90 and 128 to 170; these read MPKG…KEPV and SANS…RGET. Composition is skewed to basic and acidic residues over residues 21–54 and 69–90; these read MVEK…VRER and EQKD…KEPV. Residues 128 to 155 show a composition bias toward polar residues; sequence SANSPVDTTPKHPSQSTVCQKGTPNSAS. Residues 156–170 show a composition bias toward basic and acidic residues; sequence KTKDKVNKRNERGET. 4 ANK repeats span residues 167–196, 200–229, 233–262, and 266–292; these read RGET…DVNV, AGWT…EVNT, DDDT…NPQQ, and KGET…YTSS. Serine 276 is modified (phosphoserine). The interval 289-365 is disordered; the sequence is YTSSEESSTE…DRVPPVDDKH (77 aa). Positions 295 to 305 are enriched in acidic residues; it reads SSTESSEEEDA. Polar residues predominate over residues 309–320; it reads APSSSVDGNNTD. 2 stretches are compositionally biased toward basic and acidic residues: residues 322 to 335 and 356 to 365; these read EFEK…KNPE and DRVPPVDDKH. A Phosphoserine modification is found at serine 408. Threonine 410 is modified (phosphothreonine). Position 411 is a phosphoserine (serine 411). Disordered stretches follow at residues 423–504, 517–651, and 727–805; these read GEKL…CLKG, SLSA…GQCS, and DANK…DKEK. Basic and acidic residues predominate over residues 438–451; that stretch reads KARESSSSRQQKEK. The segment covering 452–462 has biased composition (basic residues); it reads NKLKKKRKKET. Over residues 463–475 the composition is skewed to basic and acidic residues; that stretch reads KGKEVRFGKRSDK. The span at 484–494 shows a compositional bias: acidic residues; sequence ESSESEEDDGD. Over residues 517-528 the composition is skewed to low complexity; it reads SLSASSTSSHGS. The span at 537–550 shows a compositional bias: basic and acidic residues; it reads GHTDQHTKHWRTDN. Residues 557–574 show a composition bias toward polar residues; sequence PAWSEVSSLSDSSRTGLT. Over residues 575–588 the composition is skewed to low complexity; that stretch reads SESDCSSEGSSVES. Composition is skewed to basic residues over residues 591-602 and 633-646; these read PTRRKQEHRKRG and VKKH…KHKE. Serine 838 is modified (phosphoserine). 2 stretches are compositionally biased toward basic and acidic residues: residues 918–931 and 938–962; these read KNSE…EKHK and SEKD…IRSE. Disordered regions lie at residues 918–962, 977–1037, and 1051–1074; these read KNSE…IRSE, SFKD…STLD, and EKKD…FDQL. Serine 1070 is modified (phosphoserine). Threonine 1111 carries the phosphothreonine modification. At serine 1114 the chain carries Phosphoserine. 2 disordered regions span residues 1114–1388 and 1420–1711; these read SEDE…KDAS and LFSS…TPSC. 8 stretches are compositionally biased toward basic and acidic residues: residues 1133-1297, 1326-1343, 1355-1388, 1420-1444, 1464-1535, 1546-1564, 1577-1587, and 1595-1640; these read DTQR…DKIS, AEDK…LREK, KSHE…KDAS, LFSS…KELK, RERW…KGDS, VPSR…KLLG, LSQKDLEIEER, and MKQM…KVKE. Serine 1676 bears the Phosphoserine mark. Over residues 1678–1695 the composition is skewed to polar residues; the sequence is RTEQSRPTGVPTPTSVVS. Phosphoserine is present on residues serine 1777 and serine 1832. A phosphotyrosine mark is found at tyrosine 1835 and tyrosine 1836. Serine 1837 and serine 1844 each carry phosphoserine. Disordered regions lie at residues 1863–1900, 1981–2027, and 2111–2386; these read PPDS…GLPL, SPKH…EVKD, and HEAF…STQQ. Phosphoserine is present on residues serine 1981 and serine 2139. 2 stretches are compositionally biased toward pro residues: residues 2150 to 2160 and 2175 to 2184; these read PVPPAESPPGP and EEPPAPPPQE. Residues 2273–2284 are compositionally biased toward low complexity; it reads SAEASCVVAAAE. Basic and acidic residues predominate over residues 2297–2315; sequence PEPKPTSEVPKAPKVEEVP. An important for protein degradation region spans residues 2349-2643; the sequence is AKGRASEEED…VNDDFVLLPA (295 aa). The span at 2371–2386 shows a compositional bias: low complexity; that stretch reads RSSQQLQQQLNTSTQQ.

Interacts with the PAS region of the p160 coactivators. Subject to proteasomal degradation which is probably essential to regulate its activity.

The protein resides in the nucleus. Chromatin regulator which modulates histone acetylation and gene expression in neural precursor cells. May recruit histone deacetylases (HDACs) to the p160 coactivators/nuclear receptor complex to inhibit ligand-dependent transactivation. Has a role in proliferation and development of cortical neural precursors. May also regulate bone homeostasis. The chain is Ankyrin repeat domain-containing protein 11 from Mus musculus (Mouse).